The sequence spans 382 residues: GTPase Obg (382 aa).

Residues 2–161 (VKFADESKIR…REIIVELNII (160 aa)) enclose the Obg domain. The OBG-type G domain occupies 162–328 (ADIGLVGFPN…VKKAFIRLAD (167 aa)). GTP is bound by residues 168–175 (GFPNAGKS), 193–197 (FTTKI), 215–218 (DIPG), 282–285 (TKLD), and 309–311 (SLY). 2 residues coordinate Mg(2+): serine 175 and threonine 195. Residues 360-382 (EEKNDDEHFGATVSLSRKRKPKK) form a disordered region.

The protein belongs to the TRAFAC class OBG-HflX-like GTPase superfamily. OBG GTPase family. Monomer. Mg(2+) serves as cofactor.

The protein localises to the cytoplasm. Its function is as follows. An essential GTPase which binds GTP, GDP and possibly (p)ppGpp with moderate affinity, with high nucleotide exchange rates and a fairly low GTP hydrolysis rate. Plays a role in control of the cell cycle, stress response, ribosome biogenesis and in those bacteria that undergo differentiation, in morphogenesis control. This Treponema denticola (strain ATCC 35405 / DSM 14222 / CIP 103919 / JCM 8153 / KCTC 15104) protein is GTPase Obg.